A 98-amino-acid chain; its full sequence is Large ribosomal subunit protein uL23 (98 aa).

This sequence belongs to the universal ribosomal protein uL23 family. In terms of assembly, part of the 50S ribosomal subunit. Contacts protein L29, and trigger factor when it is bound to the ribosome.

Its function is as follows. One of the early assembly proteins it binds 23S rRNA. One of the proteins that surrounds the polypeptide exit tunnel on the outside of the ribosome. Forms the main docking site for trigger factor binding to the ribosome. The polypeptide is Large ribosomal subunit protein uL23 (Rickettsia canadensis (strain McKiel)).